Here is a 255-residue protein sequence, read N- to C-terminus: uncharacterized protein (255 aa).

The first 23 residues, 1–23 (MKRLNKLVLGIIFLFLVISITAG), serve as a signal peptide directing secretion. A lipid anchor (N-palmitoyl cysteine) is attached at Cys24. Cys24 is lipidated: S-diacylglycerol cysteine.

This sequence belongs to the staphylococcal tandem lipoprotein family.

It localises to the cell membrane. This is an uncharacterized protein from Staphylococcus aureus (strain USA300).